A 488-amino-acid chain; its full sequence is 3-octaprenyl-4-hydroxybenzoate carboxy-lyase (488 aa).

Asn172 is a Mn(2+) binding site. Residues 175–177 (IYR), 189–191 (RWL), and 194–195 (RG) each bind prenylated FMN. A Mn(2+)-binding site is contributed by Glu238. Residue Asp287 is the Proton donor of the active site.

The protein belongs to the UbiD family. In terms of assembly, homohexamer. Prenylated FMN serves as cofactor. Requires Mn(2+) as cofactor.

The protein localises to the cell membrane. It catalyses the reaction a 4-hydroxy-3-(all-trans-polyprenyl)benzoate + H(+) = a 2-(all-trans-polyprenyl)phenol + CO2. The protein operates within cofactor biosynthesis; ubiquinone biosynthesis. Catalyzes the decarboxylation of 3-octaprenyl-4-hydroxy benzoate to 2-octaprenylphenol, an intermediate step in ubiquinone biosynthesis. This chain is 3-octaprenyl-4-hydroxybenzoate carboxy-lyase, found in Pseudomonas syringae pv. tomato (strain ATCC BAA-871 / DC3000).